Consider the following 255-residue polypeptide: 5-oxoprolinase subunit A (255 aa).

This sequence belongs to the LamB/PxpA family. Forms a complex composed of PxpA, PxpB and PxpC.

The catalysed reaction is 5-oxo-L-proline + ATP + 2 H2O = L-glutamate + ADP + phosphate + H(+). Its function is as follows. Catalyzes the cleavage of 5-oxoproline to form L-glutamate coupled to the hydrolysis of ATP to ADP and inorganic phosphate. This is 5-oxoprolinase subunit A from Campylobacter jejuni subsp. doylei (strain ATCC BAA-1458 / RM4099 / 269.97).